The sequence spans 264 residues: Signal peptidase I (264 aa).

The Cytoplasmic segment spans residues 1-18 (MNRDNINSNKTVKQEFGS). A helical transmembrane segment spans residues 19–39 (FAFVICIALVIRILIMEPFTV). Over 40–264 (PTGSMKATIL…IFKNLYNVDE (225 aa)) the chain is Extracellular. Residues Ser43 and Lys106 contribute to the active site.

Belongs to the peptidase S26 family.

The protein localises to the cell membrane. The enzyme catalyses Cleavage of hydrophobic, N-terminal signal or leader sequences from secreted and periplasmic proteins.. The protein is Signal peptidase I (lepB) of Rickettsia prowazekii (strain Madrid E).